The primary structure comprises 131 residues: Ribosome-binding factor A (131 aa).

It belongs to the RbfA family. In terms of assembly, monomer. Binds 30S ribosomal subunits, but not 50S ribosomal subunits or 70S ribosomes.

It is found in the cytoplasm. Functionally, one of several proteins that assist in the late maturation steps of the functional core of the 30S ribosomal subunit. Associates with free 30S ribosomal subunits (but not with 30S subunits that are part of 70S ribosomes or polysomes). Required for efficient processing of 16S rRNA. May interact with the 5'-terminal helix region of 16S rRNA. The sequence is that of Ribosome-binding factor A from Gloeothece citriformis (strain PCC 7424) (Cyanothece sp. (strain PCC 7424)).